Reading from the N-terminus, the 207-residue chain is Probable GTP-binding protein EngB (207 aa).

The 172-residue stretch at 22-193 (RVPEIVFAGR…LAHFDHYLSG (172 aa)) folds into the EngB-type G domain. Residues 30 to 37 (GRSNVGKS), 57 to 61 (GKTRL), 75 to 78 (DIPG), 142 to 145 (TKDD), and 172 to 174 (YSS) contribute to the GTP site. Mg(2+) is bound by residues Ser-37 and Thr-59.

The protein belongs to the TRAFAC class TrmE-Era-EngA-EngB-Septin-like GTPase superfamily. EngB GTPase family. It depends on Mg(2+) as a cofactor.

Its function is as follows. Necessary for normal cell division and for the maintenance of normal septation. In Chlorobium luteolum (strain DSM 273 / BCRC 81028 / 2530) (Pelodictyon luteolum), this protein is Probable GTP-binding protein EngB.